We begin with the raw amino-acid sequence, 352 residues long: Protein RecA (352 aa).

Residue 67 to 74 coordinates ATP; the sequence is GPESSGKT.

Belongs to the RecA family.

It is found in the cytoplasm. Can catalyze the hydrolysis of ATP in the presence of single-stranded DNA, the ATP-dependent uptake of single-stranded DNA by duplex DNA, and the ATP-dependent hybridization of homologous single-stranded DNAs. It interacts with LexA causing its activation and leading to its autocatalytic cleavage. The chain is Protein RecA from Klebsiella pneumoniae subsp. pneumoniae (strain ATCC 700721 / MGH 78578).